Consider the following 565-residue polypeptide: E3 ubiquitin-protein ligase ipaH7.8 (565 aa).

Positions 1 to 22 (MFSVNNTHSSVSCSPSINSNST) are disordered. Residues 1-262 (MFSVNNTHSS…YHGPQIYFSM (262 aa)) form an interaction with target proteins region. Over residues 9–22 (SSVSCSPSINSNST) the composition is skewed to low complexity. LRR repeat units follow at residues 58–79 (QEAV…PKHI), 80–97 (SALI…KLPA), 98–119 (FLKE…PESL), 120–137 (TTLS…VLPN), 138–157 (HLTS…ALPE), 158–179 (KLKF…PDKL), 180–199 (EILC…SDRN), 202–223 (RQKE…FSQL), and 225–248 (SSYR…QRLT). Residues 263-270 (SDGQQNTL) are linker. Residues 271 to 565 (HRPLADAVTA…SENGSRLHHS (295 aa)) form an E3 ubiquitin-protein ligase catalytic domain region. An NEL domain is found at 273–565 (PLADAVTAWF…SENGSRLHHS (293 aa)). Cysteine 357 functions as the Glycyl thioester intermediate in the catalytic mechanism.

The protein belongs to the LRR-containing bacterial E3 ligase family. Post-translationally, ubiquitinated in the presence of host E1 ubiquitin-activating enzyme, E2 ubiquitin-conjugating enzyme and ubiquitin.

The protein resides in the secreted. Its subcellular location is the host cytoplasm. The catalysed reaction is S-ubiquitinyl-[E2 ubiquitin-conjugating enzyme]-L-cysteine + [acceptor protein]-L-lysine = [E2 ubiquitin-conjugating enzyme]-L-cysteine + N(6)-ubiquitinyl-[acceptor protein]-L-lysine.. It functions in the pathway protein modification; protein ubiquitination. Its function is as follows. E3 ubiquitin ligase effector protein that interferes with host's innate immunity. Functions to alter host cell physiology and promote bacterial survival in host tissues. Catalyzes ubiquitination of human gasdermins GSDMB and GSDMD, promoting their degradation by the proteasome, thereby preventing cell death. In contrast, activates host cell pyroptosis in mouse cells: catalyzes ubiquitination of mouse Nlrp1b allele 1 protein, releasing the cleaved C-terminal part of Nlrp1b, which polymerizes and forms the Nlrp1b inflammasome followed by host cell pyroptosis. Does not catalyze ubiquitination of mouse GSDMD. This chain is E3 ubiquitin-protein ligase ipaH7.8, found in Shigella flexneri.